The chain runs to 308 residues: ADP-L-glycero-D-manno-heptose-6-epimerase (308 aa).

NADP(+)-binding positions include 10-11 (FI), 31-32 (DN), lysine 38, lysine 53, 75-79 (EGACS), and asparagine 92. Tyrosine 139 (proton acceptor) is an active-site residue. Lysine 143 contributes to the NADP(+) binding site. Asparagine 168 contacts substrate. NADP(+) is bound by residues valine 169 and lysine 177. The active-site Proton acceptor is lysine 177. Substrate is bound by residues serine 179, histidine 186, 200–203 (FAGS), arginine 208, and tyrosine 271.

It belongs to the NAD(P)-dependent epimerase/dehydratase family. HldD subfamily. Homopentamer. NADP(+) is required as a cofactor.

The catalysed reaction is ADP-D-glycero-beta-D-manno-heptose = ADP-L-glycero-beta-D-manno-heptose. It functions in the pathway nucleotide-sugar biosynthesis; ADP-L-glycero-beta-D-manno-heptose biosynthesis; ADP-L-glycero-beta-D-manno-heptose from D-glycero-beta-D-manno-heptose 7-phosphate: step 4/4. Functionally, catalyzes the interconversion between ADP-D-glycero-beta-D-manno-heptose and ADP-L-glycero-beta-D-manno-heptose via an epimerization at carbon 6 of the heptose. In Haemophilus influenzae (strain PittGG), this protein is ADP-L-glycero-D-manno-heptose-6-epimerase.